A 23-amino-acid chain; its full sequence is Melittin-related peptide AK-23-1 (23 aa).

Lys-23 is modified (lysine amide).

Expressed by the skin glands.

It is found in the secreted. This Rana arvalis (Moor frog) protein is Melittin-related peptide AK-23-1.